The primary structure comprises 23 residues: 48 kDa cell wall protein (23 aa).

It localises to the secreted. Its subcellular location is the cell wall. The sequence is that of 48 kDa cell wall protein from Nicotiana tabacum (Common tobacco).